The primary structure comprises 469 residues: UDP-N-acetylmuramate--L-alanine ligase (469 aa).

ATP is bound at residue 122 to 128; that stretch reads GTHGKTT.

This sequence belongs to the MurCDEF family.

It localises to the cytoplasm. It carries out the reaction UDP-N-acetyl-alpha-D-muramate + L-alanine + ATP = UDP-N-acetyl-alpha-D-muramoyl-L-alanine + ADP + phosphate + H(+). Its pathway is cell wall biogenesis; peptidoglycan biosynthesis. Functionally, cell wall formation. This is UDP-N-acetylmuramate--L-alanine ligase from Legionella pneumophila subsp. pneumophila (strain Philadelphia 1 / ATCC 33152 / DSM 7513).